Here is a 326-residue protein sequence, read N- to C-terminus: Flotillin-like protein FloA (326 aa).

Residues 3-23 (FTTIVVILLVIACIVVLFFIG) traverse the membrane as a helical segment.

The protein belongs to the flotillin-like FloA family. As to quaternary structure, homooligomerizes.

It is found in the cell membrane. The protein localises to the membrane raft. Found in functional membrane microdomains (FMM) that may be equivalent to eukaryotic membrane rafts. FMMs are highly dynamic and increase in number as cells age. Flotillins are thought to be important factors in membrane fluidity. In Desulforapulum autotrophicum (strain ATCC 43914 / DSM 3382 / VKM B-1955 / HRM2) (Desulfobacterium autotrophicum), this protein is Flotillin-like protein FloA.